Reading from the N-terminus, the 152-residue chain is SKP1-like protein 8 (152 aa).

The segment at 94 to 152 is interaction with the F-box domain of F-box proteins; the sequence is TNAANFLNNKSLLHLAGQTVADMIKGNTPKQMREFFNIENDLTPEEEAAIRRENKWAFE.

The protein belongs to the SKP1 family. In terms of assembly, part of a SCF (SKP1-cullin-F-box) protein ligase complex. In terms of tissue distribution, restricted to siliques.

The protein resides in the nucleus. The protein operates within protein modification; protein ubiquitination. In terms of biological role, involved in ubiquitination and subsequent proteasomal degradation of target proteins. Together with CUL1, RBX1 and a F-box protein, it forms a SCF E3 ubiquitin ligase complex. The functional specificity of this complex depends on the type of F-box protein. In the SCF complex, it serves as an adapter that links the F-box protein to CUL1. The protein is SKP1-like protein 8 (ASK8) of Arabidopsis thaliana (Mouse-ear cress).